Here is a 156-residue protein sequence, read N- to C-terminus: MSDICWICNDVCDERNNFCGCNEEYKVVHIKCMQLWINYSKKKECNLCKTKYNIKKTYVSFKKWNWCFNDKKTTLFKIFFILFALVFIFLTITLSNDMANLVTGINDLICSIIFLIVYTVVMLTSICFSVFVVAIVVDFLLEAKEKNSFLTIREIV.

The RING-CH-type zinc-finger motif lies at Met-1 to Lys-55. The Cytoplasmic segment spans residues Met-1–Thr-73. Cys-5, Cys-8, Cys-19, Cys-21, His-29, Cys-32, Cys-45, and Cys-48 together coordinate Zn(2+). A helical membrane pass occupies residues Thr-74–Leu-94. Over Ser-95–Ser-111 the chain is Lumenal. The helical transmembrane segment at Ile-112–Val-132 threads the bilayer. At Val-133–Val-156 the chain is on the cytoplasmic side.

Belongs to the poxviridae LAP protein family.

The protein localises to the host membrane. The protein resides in the host Golgi apparatus. It is found in the host trans-Golgi network membrane. It localises to the host early endosome membrane. It carries out the reaction S-ubiquitinyl-[E2 ubiquitin-conjugating enzyme]-L-cysteine + [acceptor protein]-L-lysine = [E2 ubiquitin-conjugating enzyme]-L-cysteine + N(6)-ubiquitinyl-[acceptor protein]-L-lysine.. In terms of biological role, E3 ubiquitin-protein ligase which promotes ubiquitination and subsequent degradation of host MHC-I and CD4 molecules, presumably to prevent lysis of infected cells by cytotoxic T-lymphocytes and NK cell. Binds target molecules through transmembrane interaction. The result of this ubiquitination is the enhancement of the endocytosis of the target chain and the delivery to the lysosome, where it is proteolytically destroyed. In Yaba-like disease virus (YLDV), this protein is E3 ubiquitin-protein ligase LAP.